A 248-amino-acid polypeptide reads, in one-letter code: UPF0173 metal-dependent hydrolase Hlac_1347 (248 aa).

This sequence belongs to the UPF0173 family.

The sequence is that of UPF0173 metal-dependent hydrolase Hlac_1347 from Halorubrum lacusprofundi (strain ATCC 49239 / DSM 5036 / JCM 8891 / ACAM 34).